The sequence spans 192 residues: Histone H3-like centromeric protein CSE4 (192 aa).

The H3-like stretch occupies residues 88-190; that stretch reads AKSHGSKYKP…MQLARRIRGQ (103 aa).

It belongs to the histone H3 family. In terms of assembly, component of centromeric nucleosomes, where DNA is wrapped around a histone octamer core. The octamer contains two molecules each of H2A, H2B, CSE4/CENPA and H4 assembled in one CSE4-H4 heterotetramer and two H2A-H2B heterodimers. Interacts with the inner kinetochore. Post-translationally, ubiquitinated. Is degraded through ubiquitin-mediated proteolysis when not protected by its association to the kinetochore.

It localises to the nucleus. Its subcellular location is the chromosome. The protein resides in the centromere. Its function is as follows. Histone H3-like nucleosomal protein that is specifically found in centromeric nucleosomes. Replaces conventional H3 in the nucleosome core of centromeric chromatin that serves as an assembly site for the inner kinetochore. Required for recruitment and assembly of kinetochore proteins, mitotic progression and chromosome segregation. May serve as an epigenetic mark that propagates centromere identity through replication and cell division. This is Histone H3-like centromeric protein CSE4 (CSE4) from Kluyveromyces marxianus (Yeast).